We begin with the raw amino-acid sequence, 268 residues long: Zinc import ATP-binding protein ZnuC (268 aa).

Residues 16–231 enclose the ABC transporter domain; it reads IQLKNINVVF…PTFMRLWGNQ (216 aa). 48-55 is a binding site for ATP; the sequence is GPNGGGKS.

The protein belongs to the ABC transporter superfamily. Zinc importer (TC 3.A.1.15.5) family. As to quaternary structure, the complex is composed of two ATP-binding proteins (ZnuC), two transmembrane proteins (ZnuB) and a solute-binding protein (ZnuA).

The protein localises to the cell inner membrane. The enzyme catalyses Zn(2+)(out) + ATP(in) + H2O(in) = Zn(2+)(in) + ADP(in) + phosphate(in) + H(+)(in). Functionally, part of the ABC transporter complex ZnuABC involved in zinc import. Responsible for energy coupling to the transport system. This chain is Zinc import ATP-binding protein ZnuC, found in Haemophilus influenzae (strain ATCC 51907 / DSM 11121 / KW20 / Rd).